The following is a 201-amino-acid chain: Small ribosomal subunit protein uS4 (201 aa).

The 65-residue stretch at 91–155 folds into the S4 RNA-binding domain; it reads SRLDNVVYRA…STLPFQVARE (65 aa).

It belongs to the universal ribosomal protein uS4 family. In terms of assembly, part of the 30S ribosomal subunit. Contacts protein S5. The interaction surface between S4 and S5 is involved in control of translational fidelity.

Its function is as follows. One of the primary rRNA binding proteins, it binds directly to 16S rRNA where it nucleates assembly of the body of the 30S subunit. With S5 and S12 plays an important role in translational accuracy. The sequence is that of Small ribosomal subunit protein uS4 from Rhodococcus jostii (strain RHA1).